Here is a 273-residue protein sequence, read N- to C-terminus: Mediator of RNA polymerase II transcription subunit 18 (273 aa).

Low complexity predominate over residues glycine 90–serine 106. Residues glycine 90–phenylalanine 114 form a disordered region.

It belongs to the Mediator complex subunit 18 family. In terms of assembly, component of the Mediator complex.

The protein localises to the nucleus. Its function is as follows. Component of the Mediator complex, a coactivator involved in the regulated transcription of nearly all RNA polymerase II-dependent genes. Mediator functions as a bridge to convey information from gene-specific regulatory proteins to the basal RNA polymerase II transcription machinery. Mediator is recruited to promoters by direct interactions with regulatory proteins and serves as a scaffold for the assembly of a functional preinitiation complex with RNA polymerase II and the general transcription factors. In Aspergillus oryzae (strain ATCC 42149 / RIB 40) (Yellow koji mold), this protein is Mediator of RNA polymerase II transcription subunit 18 (srb5).